A 32-amino-acid polypeptide reads, in one-letter code: Cyclotide Hyfl-C (32 aa).

A cross-link (cyclopeptide (Gly-Asn)) is located at residues 1–32 (GSPRQCAETCFIGKCYTEELGCTCTAFLCMKN). 3 disulfide bridges follow: Cys6-Cys22, Cys10-Cys24, and Cys15-Cys29.

Belongs to the cyclotide family. Moebius subfamily. This is a cyclic peptide.

Probably participates in a plant defense mechanism. This is Cyclotide Hyfl-C from Hybanthus floribundus (Greenviolet).